The sequence spans 252 residues: Probable transcriptional regulatory protein Caur_1043 (252 aa).

The segment covering 1-14 (MSGHSKWHTIRRTK) has biased composition (basic residues). The tract at residues 1–22 (MSGHSKWHTIRRTKGVNDQRRG) is disordered.

It belongs to the TACO1 family.

The protein resides in the cytoplasm. The chain is Probable transcriptional regulatory protein Caur_1043 from Chloroflexus aurantiacus (strain ATCC 29366 / DSM 635 / J-10-fl).